The following is a 463-amino-acid chain: Metalloprotease slr0863 (463 aa).

It belongs to the peptidase U62 family.

Functionally, probable metalloprotease. The polypeptide is Metalloprotease slr0863 (Synechocystis sp. (strain ATCC 27184 / PCC 6803 / Kazusa)).